Reading from the N-terminus, the 187-residue chain is Oligoribonuclease (187 aa).

The region spanning 7-170 (LCWLDMEMTG…DDILESIEEM (164 aa)) is the Exonuclease domain. Y128 is a catalytic residue.

The protein belongs to the oligoribonuclease family.

Its subcellular location is the cytoplasm. Its function is as follows. 3'-to-5' exoribonuclease specific for small oligoribonucleotides. The chain is Oligoribonuclease from Neisseria meningitidis serogroup B (strain ATCC BAA-335 / MC58).